Reading from the N-terminus, the 121-residue chain is MKFGVGFLLSCLVALNTVQNMLALSCLPCDFDTLKCSPLPDDDDCFPAYTPCGCCPQCAGEEDDFCDNFTVRCHPDLVCVNATGFEKKFVYWYEFDFKGTCQESELETEYEYEYEENETKK.

A signal peptide spans 1–23; it reads MKFGVGFLLSCLVALNTVQNMLA. One can recognise an IGFBP N-terminal domain in the interval 24–104; the sequence is LSCLPCDFDT…FDFKGTCQES (81 aa). Cystine bridges form between C26/C52, C29/C54, C36/C55, C45/C58, C66/C79, and C73/C101. N68, N81, and N117 each carry an N-linked (GlcNAc...) asparagine glycan.

In terms of tissue distribution, component of the acid-insoluble organic matrix of calcified layers of the shell (at protein level).

The protein localises to the secreted. The protein is Perlustrin-like protein of Lottia gigantea (Giant owl limpet).